Here is a 93-residue protein sequence, read N- to C-terminus: MLKPLGDRVVLKIEEKEEKVGGFVIAGNSHAATKTATVVAVGQGVRTLTGELVAPSVKAGDKVLVESHAGVEVKDGEETYLLVSEANILAIVE.

Belongs to the GroES chaperonin family. Heptamer of 7 subunits arranged in a ring. Interacts with the chaperonin GroEL.

The protein localises to the cytoplasm. In terms of biological role, together with the chaperonin GroEL, plays an essential role in assisting protein folding. The GroEL-GroES system forms a nano-cage that allows encapsulation of the non-native substrate proteins and provides a physical environment optimized to promote and accelerate protein folding. GroES binds to the apical surface of the GroEL ring, thereby capping the opening of the GroEL channel. This Streptococcus gordonii (strain Challis / ATCC 35105 / BCRC 15272 / CH1 / DL1 / V288) protein is Co-chaperonin GroES.